We begin with the raw amino-acid sequence, 691 residues long: MATKRLARQLGLIRRKSIAPANGNLGRSKSKQLFDYLIVIDFESTCWNDGKHHHSQEIIEFPAVLLNTSTGQIDSEFQAYVQPQEHPILSEFCMELTGIKQAQVDEGVPLKICLSQFCKWIHKIQQQKNIIFATGISEPSASEVKLCAFVTWSDWDLGVCLEYECKRKQLLKPVFLNSWIDLRATYKLFYRRKPKGLSGALQEVGIEFSGREHSGLDDSRNTALLAWKMIRDGCVMKITRSLNKVPTKKNFSILARNLNTIQVEEMSACNISIQGPSIYNKEPKNIINPHEKVQMKSICANSPIKAQQDQLQVKNNIKASLHNVKSSLPLFNTKSSTSVGQLQSPTLNSPIYMQKQGKNEHLAFNTKSKASTVGSELVLVSTTVPTVHHVSDLEMSSTLDCLPVLADWEDVVLLPASQPEENVDCTVPISDSDLEISFNSGERLMVLKELEMSSHENFGDIEETPQKSETSKSIVYKSPHTTIYNVKEAKDPGSDISAFKLPEHKSSTFNRVNANMSHPLVLGKHPLLSGGTKRNPCSPQAFPPAKKQPFTIHEEKPTSSDCSPVRSSSWRRLPSILTSTVNLQEPWKSGKMTPPLCKCGRRSKRLVVSNNGPNHGKVFYCCPIGKYQENRKCCGYFKWEQTLQKERANSMVPSHSTGGLTFSSPETSHICDRNLSISTKNSLRLRPSMRN.

Positions 37–226 (LIVIDFESTC…DDSRNTALLA (190 aa)) constitute an Exonuclease domain. 3 residues coordinate Mg(2+): Asp41, Glu43, and Asp156. Glu43 acts as the Proton acceptor in catalysis. Glu43 provides a ligand contact to AMP. The Proton acceptor role is filled by His213. His213 contacts AMP. Asp218 contacts Mg(2+). Zn(2+)-binding residues include Cys597, Cys599, Cys622, and Cys634. Residues 597–643 (CKCGRRSKRLVVSNNGPNHGKVFYCCPIGKYQENRKCCGYFKWEQTL) form a GRF-type zinc finger.

Belongs to the ERI2 family. The cofactor is Mg(2+).

The chain is ERI1 exoribonuclease 2 (ERI2) from Homo sapiens (Human).